The chain runs to 252 residues: Probable transcriptional regulatory protein Npun_R5651 (252 aa).

This sequence belongs to the TACO1 family.

The protein resides in the cytoplasm. The sequence is that of Probable transcriptional regulatory protein Npun_R5651 from Nostoc punctiforme (strain ATCC 29133 / PCC 73102).